The following is a 401-amino-acid chain: MEKKKVVLAYSGGLDTSVAIKWLQEKNYDIIALCLDLGEGKDLAFVKEKALSVGAIKSYMIDVQEEFANEYALMAMQAHTLYEGKYPLVSALSRPLIAKKLVEIAEQEGATAVAHGCTGKGNDQVRFEVSIQALNPYLEVIAPVREWKWSREEEIAYAKENNVPIPINLDSPFSIDQNLWGRSNECGILEDPWAAPPEDAYEMTLALEDTPNKPEFVEIGFEAGVPTTLNGTAYPLSELIKTLNALAGKHGVGRIDHVENRLVGIKSREVYECPAAMTLITAHKELEDLTLVKEVAHFKPMIEQKITELIYNGLWFSPLKQALNAFLQETQKNVTGTVRVKLFKGHAIVEGRKSEYSLYDEKLATYTAQDEFNHDAAVGFISLFGLPTKVYSQVNQKKVEA.

9 to 17 is a binding site for ATP; the sequence is AYSGGLDTS. Tyr-86 provides a ligand contact to L-citrulline. Gly-116 is a binding site for ATP. Positions 118, 122, and 123 each coordinate L-aspartate. Asn-122 provides a ligand contact to L-citrulline. Residues Arg-126, Ser-174, Ser-183, Glu-259, and Tyr-271 each coordinate L-citrulline.

The protein belongs to the argininosuccinate synthase family. Type 1 subfamily. In terms of assembly, homotetramer.

The protein localises to the cytoplasm. It carries out the reaction L-citrulline + L-aspartate + ATP = 2-(N(omega)-L-arginino)succinate + AMP + diphosphate + H(+). It participates in amino-acid biosynthesis; L-arginine biosynthesis; L-arginine from L-ornithine and carbamoyl phosphate: step 2/3. The chain is Argininosuccinate synthase from Bacillus thuringiensis (strain Al Hakam).